A 232-amino-acid polypeptide reads, in one-letter code: Phosphatidylserine decarboxylase proenzyme (232 aa).

Ser190 acts as the Schiff-base intermediate with substrate; via pyruvic acid in catalysis. Ser190 carries the post-translational modification Pyruvic acid (Ser); by autocatalysis.

This sequence belongs to the phosphatidylserine decarboxylase family. PSD-A subfamily. Heterodimer of a large membrane-associated beta subunit and a small pyruvoyl-containing alpha subunit. Pyruvate serves as cofactor. Is synthesized initially as an inactive proenzyme. Formation of the active enzyme involves a self-maturation process in which the active site pyruvoyl group is generated from an internal serine residue via an autocatalytic post-translational modification. Two non-identical subunits are generated from the proenzyme in this reaction, and the pyruvate is formed at the N-terminus of the alpha chain, which is derived from the carboxyl end of the proenzyme. The post-translation cleavage follows an unusual pathway, termed non-hydrolytic serinolysis, in which the side chain hydroxyl group of the serine supplies its oxygen atom to form the C-terminus of the beta chain, while the remainder of the serine residue undergoes an oxidative deamination to produce ammonia and the pyruvoyl prosthetic group on the alpha chain.

It is found in the cell membrane. The catalysed reaction is a 1,2-diacyl-sn-glycero-3-phospho-L-serine + H(+) = a 1,2-diacyl-sn-glycero-3-phosphoethanolamine + CO2. It functions in the pathway phospholipid metabolism; phosphatidylethanolamine biosynthesis; phosphatidylethanolamine from CDP-diacylglycerol: step 2/2. In terms of biological role, catalyzes the formation of phosphatidylethanolamine (PtdEtn) from phosphatidylserine (PtdSer). In Brucella anthropi (strain ATCC 49188 / DSM 6882 / CCUG 24695 / JCM 21032 / LMG 3331 / NBRC 15819 / NCTC 12168 / Alc 37) (Ochrobactrum anthropi), this protein is Phosphatidylserine decarboxylase proenzyme.